A 472-amino-acid polypeptide reads, in one-letter code: Adenosylhomocysteinase (472 aa).

Positions 61, 136, and 196 each coordinate substrate. Residue 197 to 199 (TTT) participates in NAD(+) binding. 2 residues coordinate substrate: Lys226 and Asp230. NAD(+)-binding positions include Asn231, 260–265 (GYGDVG), Glu283, Asn318, 339–341 (IGH), and Asn384.

This sequence belongs to the adenosylhomocysteinase family. Requires NAD(+) as cofactor.

The protein resides in the cytoplasm. The enzyme catalyses S-adenosyl-L-homocysteine + H2O = L-homocysteine + adenosine. It functions in the pathway amino-acid biosynthesis; L-homocysteine biosynthesis; L-homocysteine from S-adenosyl-L-homocysteine: step 1/1. Functionally, may play a key role in the regulation of the intracellular concentration of adenosylhomocysteine. The polypeptide is Adenosylhomocysteinase (Cupriavidus pinatubonensis (strain JMP 134 / LMG 1197) (Cupriavidus necator (strain JMP 134))).